Here is a 153-residue protein sequence, read N- to C-terminus: MKTYSAKPADIEKKWVVIDATGLVVGRLATVIAMRLRGKHRATFTPHVDTGDNVVVINAEKVVLTGRKRDQKVYYHHTGFPGGIKERTAKFILDGRFPERVIEKAVERMLARGPLGRKVLGNLRVYKGPTHPHEAQQPTVLDVAALNSKNVRI.

Belongs to the universal ribosomal protein uL13 family. In terms of assembly, part of the 50S ribosomal subunit.

This protein is one of the early assembly proteins of the 50S ribosomal subunit, although it is not seen to bind rRNA by itself. It is important during the early stages of 50S assembly. This is Large ribosomal subunit protein uL13 from Azorhizobium caulinodans (strain ATCC 43989 / DSM 5975 / JCM 20966 / LMG 6465 / NBRC 14845 / NCIMB 13405 / ORS 571).